Consider the following 519-residue polypeptide: MAKPKKTPRPKAQTPKGFRDYFGAEVSQRAEMLQRIAGVYHRYGFDALESSGVETVEALGKFLPDVDRPNEGVFAWQEDADADKPGDWLALRYDLTAPLARVYAQHQNDLPKPYRRYAMGPVWRNEKPGPGRFRQFYQCDADTVGASSVAADAEICAMLCDCLEAVGIERGDYVVRINNRKVLNGVLEVIGALGDEPRLSQHFQEMAENLGKKMTAAKVGIVLRTIDKLDRLGKEGVRSLLGPGRKDESGDLTFGADLSKAQIDVVMSFLEAKGGTNSETLINLREIVGRSRIGKEGVDELEKISELLSAGSYGPDRIVIDPSVVRGLGYYTGPVYEAELTFEIQDDKGRTRNFGSVAGGGRYDDLVKRFTGQEVPATGVSIGVDRLLAALHAKGRLDTTDVGPVVVTVMDRDRMADYQAMVAELRQAGIRAEVYLGNPKNFGNQLKYADTRNSPVAVIEGGDEHEKGVVQIKDLILGAEIAKSATLEEWKDRPSQFEVPRAELVAKVREILAQHGLEK.

The protein belongs to the class-II aminoacyl-tRNA synthetase family. As to quaternary structure, homodimer.

The protein resides in the cytoplasm. It carries out the reaction tRNA(His) + L-histidine + ATP = L-histidyl-tRNA(His) + AMP + diphosphate + H(+). The polypeptide is Histidine--tRNA ligase (Roseobacter denitrificans (strain ATCC 33942 / OCh 114) (Erythrobacter sp. (strain OCh 114))).